We begin with the raw amino-acid sequence, 92 residues long: Sperm-specific protein Phi-1 (92 aa).

The interval 1–92 (MPSPTRRSSK…RVRAKKKKKK (92 aa)) is disordered. Basic residues-rich tracts occupy residues 7–19 (RSSK…RSRS) and 29–92 (AAKR…KKKK).

Sperm.

It is found in the nucleus. It localises to the chromosome. Functionally, involved in nuclear basic protein transition: histones are replaced by spermatid specific proteins which are themselves replaced by protamines in late spermatids. The sequence is that of Sperm-specific protein Phi-1 from Mytilus edulis (Blue mussel).